Here is a 380-residue protein sequence, read N- to C-terminus: TPR repeat-containing thioredoxin TDX (380 aa).

At Val-2 the chain carries N-acetylvaline. The span at 49–59 (TERDYEDKAET) shows a compositional bias: basic and acidic residues. Positions 49–115 (TERDYEDKAE…DENRDDAQSE (67 aa)) are disordered. A compositionally biased stretch (acidic residues) spans 69-91 (DDDDDIMESDVELDNSDVVEPDN). Residues 106-115 (DENRDDAQSE) show a composition bias toward basic and acidic residues. TPR repeat units follow at residues 112–145 (AQSEKSKAMEAISDGRFDEAIEHLTKAVMLNPTS), 147–179 (ILYATRASVFLKVKKPNAAIRDANVALQFNSDS), and 181–213 (KGYKSRGMAKAMLGQWEEAAADLHVASKLDYDE). Positions 240–263 (RKEKELQRAERERRKQQEAQEREA) are enriched in basic and acidic residues. The segment at 240-265 (RKEKELQRAERERRKQQEAQEREAQA) is disordered. The 127-residue stretch at 252 to 378 (RRKQQEAQER…LEQKIAQHSS (127 aa)) folds into the Thioredoxin domain. Active-site nucleophile residues include Cys-304 and Cys-307. Cys-304 and Cys-307 form a disulfide bridge.

Belongs to the thioredoxin family. Oligomerization under high temperature.

In terms of biological role, thiol-disulfide oxidoreductase that possesses insulin disulfide bonds reducing activity, disulfide reductase, foldase chaperone and holdase chaperone activities. Heat shock causes oligomerization and formation of high molecular weiht (HMW) complexes with concomitant functional switching from a disulfide reductase and foldase chaperone to a holdase chaperone. May interact with HSP70 proteins through the TPR repeats. The chain is TPR repeat-containing thioredoxin TDX (TDX) from Arabidopsis thaliana (Mouse-ear cress).